The chain runs to 209 residues: Urease accessory protein UreG (209 aa).

A GTP-binding site is contributed by 18 to 25 (GPVGSGKT).

It belongs to the SIMIBI class G3E GTPase family. UreG subfamily. As to quaternary structure, homodimer. UreD, UreF and UreG form a complex that acts as a GTP-hydrolysis-dependent molecular chaperone, activating the urease apoprotein by helping to assemble the nickel containing metallocenter of UreC. The UreE protein probably delivers the nickel.

It is found in the cytoplasm. In terms of biological role, facilitates the functional incorporation of the urease nickel metallocenter. This process requires GTP hydrolysis, probably effectuated by UreG. This chain is Urease accessory protein UreG, found in Cupriavidus pinatubonensis (strain JMP 134 / LMG 1197) (Cupriavidus necator (strain JMP 134)).